The primary structure comprises 148 residues: Large ribosomal subunit protein uL15 (148 aa).

The interval 1–47 (MTKLEDLRPTPGSVKPRKRVGRGIGSGHGKTSGRGHKGQKSRGSGKV) is disordered. The segment covering 31 to 45 (TSGRGHKGQKSRGSG) has biased composition (basic residues).

The protein belongs to the universal ribosomal protein uL15 family. As to quaternary structure, part of the 50S ribosomal subunit.

Its function is as follows. Binds to the 23S rRNA. This Pseudothermotoga lettingae (strain ATCC BAA-301 / DSM 14385 / NBRC 107922 / TMO) (Thermotoga lettingae) protein is Large ribosomal subunit protein uL15.